The primary structure comprises 79 residues: Cytochrome b (79 aa).

The next 3 helical transmembrane spans lie at 1 to 7, 31 to 52, and 67 to 79; these read SALFLAM, WLIR…YLHI, and WNIG…LTMA. Heme b is bound by residues His-37 and His-51.

This sequence belongs to the cytochrome b family. As to quaternary structure, the cytochrome bc1 complex contains 11 subunits: 3 respiratory subunits (MT-CYB, CYC1 and UQCRFS1), 2 core proteins (UQCRC1 and UQCRC2) and 6 low-molecular weight proteins (UQCRH/QCR6, UQCRB/QCR7, UQCRQ/QCR8, UQCR10/QCR9, UQCR11/QCR10 and a cleavage product of UQCRFS1). This cytochrome bc1 complex then forms a dimer. The cofactor is heme b.

It is found in the mitochondrion inner membrane. Component of the ubiquinol-cytochrome c reductase complex (complex III or cytochrome b-c1 complex) that is part of the mitochondrial respiratory chain. The b-c1 complex mediates electron transfer from ubiquinol to cytochrome c. Contributes to the generation of a proton gradient across the mitochondrial membrane that is then used for ATP synthesis. The sequence is that of Cytochrome b (MT-CYB) from Dipodomys californicus (California kangaroo rat).